The primary structure comprises 80 residues: Large ribosomal subunit protein bL28 (80 aa).

A disordered region spans residues methionine 1–serine 21.

Belongs to the bacterial ribosomal protein bL28 family.

The chain is Large ribosomal subunit protein bL28 from Azobacteroides pseudotrichonymphae genomovar. CFP2.